The chain runs to 365 residues: c-di-GMP synthase (365 aa).

Belongs to the CD-NTase family. E subfamily.

It carries out the reaction 2 GTP = 3',3'-c-di-GMP + 2 diphosphate. In terms of biological role, cyclic nucleotide synthase (second messenger synthase) of a CBASS antivirus system. CBASS (cyclic oligonucleotide-based antiphage signaling system) provides immunity against bacteriophage. The CD-NTase protein synthesizes cyclic nucleotides in response to infection; these serve as specific second messenger signals. The signals activate a diverse range of effectors, leading to bacterial cell death and thus abortive phage infection. A type I-D(GG) CBASS system. Cyclic dinucleotide synthase that catalyzes the synthesis of c-di-GMP, has no activity with other NTP substrates. This Flavobacteriaceae sp. genome_bin_11 protein is c-di-GMP synthase.